Here is a 536-residue protein sequence, read N- to C-terminus: Ribulokinase (536 aa).

It belongs to the ribulokinase family.

The enzyme catalyses D-ribulose + ATP = D-ribulose 5-phosphate + ADP + H(+). It catalyses the reaction L-ribulose + ATP = L-ribulose 5-phosphate + ADP + H(+). The protein operates within carbohydrate degradation; L-arabinose degradation via L-ribulose; D-xylulose 5-phosphate from L-arabinose (bacterial route): step 2/3. In Staphylococcus epidermidis (strain ATCC 35984 / DSM 28319 / BCRC 17069 / CCUG 31568 / BM 3577 / RP62A), this protein is Ribulokinase.